The sequence spans 121 residues: Large ribosomal subunit protein uL18 (121 aa).

This sequence belongs to the universal ribosomal protein uL18 family. As to quaternary structure, part of the 50S ribosomal subunit; part of the 5S rRNA/L5/L18/L25 subcomplex. Contacts the 5S and 23S rRNAs.

Its function is as follows. This is one of the proteins that bind and probably mediate the attachment of the 5S RNA into the large ribosomal subunit, where it forms part of the central protuberance. This chain is Large ribosomal subunit protein uL18, found in Streptococcus thermophilus (strain CNRZ 1066).